Consider the following 46-residue polypeptide: Large ribosomal subunit protein bL36B (46 aa).

It belongs to the bacterial ribosomal protein bL36 family.

The polypeptide is Large ribosomal subunit protein bL36B (Cronobacter sakazakii (strain ATCC BAA-894) (Enterobacter sakazakii)).